The chain runs to 212 residues: Protein Thf1 (212 aa).

Residues E179–K201 are a coiled coil.

Belongs to the THF1 family.

Its function is as follows. May be involved in photosynthetic membrane biogenesis. In Parasynechococcus marenigrum (strain WH8102), this protein is Protein Thf1.